Here is a 425-residue protein sequence, read N- to C-terminus: MLEIRFVRASPDVVKADLERRGTPEKIAWVDEILAKDARSRELKVQTDELRRRRNTIAREINEARKTGKDAAPLLREAAELPQKIKANDAEQEEISGIIRTRLMRLPNILHESVPKGKDDTENVEIRRVGTPRTFDFELKNHGQLAADNGWADFERAAKTSGAGFYFLKGGLVMLDLALQRFALDLLGKKGFTPVIPPFMIKRDSYEGVTDLDDFEKVMYKIDGDDTYLIATSEHPIAAMYQDEIFEEKDLPLRLCGLSPCFRREIGAHGLDTKGLFRVHQFTKIEQFVFCRPENSWQIHEELLANAEEVFTKLGLPYHVVNICTGDIGTVAAKKYDIEAWMPRENAYKEVVSCSNCTSYQAASLNIRVRDKENFETKHLVHTLNSTAIATSRALRCILENYQNRDGSVTIPDVLRQYMNDREFL.

232 to 234 (TSE) contacts L-serine. Residues 263–265 (RRE) and valine 279 contribute to the ATP site. Glutamate 286 contributes to the L-serine binding site. 350 to 353 (EVVS) is a binding site for ATP. Residue threonine 387 participates in L-serine binding.

The protein belongs to the class-II aminoacyl-tRNA synthetase family. Type-1 seryl-tRNA synthetase subfamily. As to quaternary structure, homodimer. The tRNA molecule binds across the dimer.

The protein resides in the cytoplasm. It catalyses the reaction tRNA(Ser) + L-serine + ATP = L-seryl-tRNA(Ser) + AMP + diphosphate + H(+). The catalysed reaction is tRNA(Sec) + L-serine + ATP = L-seryl-tRNA(Sec) + AMP + diphosphate + H(+). It functions in the pathway aminoacyl-tRNA biosynthesis; selenocysteinyl-tRNA(Sec) biosynthesis; L-seryl-tRNA(Sec) from L-serine and tRNA(Sec): step 1/1. Catalyzes the attachment of serine to tRNA(Ser). Is also able to aminoacylate tRNA(Sec) with serine, to form the misacylated tRNA L-seryl-tRNA(Sec), which will be further converted into selenocysteinyl-tRNA(Sec). This Methanoregula boonei (strain DSM 21154 / JCM 14090 / 6A8) protein is Serine--tRNA ligase.